The following is a 281-amino-acid chain: 4-diphosphocytidyl-2-C-methyl-D-erythritol kinase (281 aa).

Lys-15 is a catalytic residue. 98–108 (PTGAGLGGGSS) contacts ATP. Asp-140 is an active-site residue.

Belongs to the GHMP kinase family. IspE subfamily.

The enzyme catalyses 4-CDP-2-C-methyl-D-erythritol + ATP = 4-CDP-2-C-methyl-D-erythritol 2-phosphate + ADP + H(+). The protein operates within isoprenoid biosynthesis; isopentenyl diphosphate biosynthesis via DXP pathway; isopentenyl diphosphate from 1-deoxy-D-xylulose 5-phosphate: step 3/6. Its function is as follows. Catalyzes the phosphorylation of the position 2 hydroxy group of 4-diphosphocytidyl-2C-methyl-D-erythritol. This is 4-diphosphocytidyl-2-C-methyl-D-erythritol kinase from Neisseria gonorrhoeae (strain ATCC 700825 / FA 1090).